The chain runs to 462 residues: Cleavage and polyadenylation specificity factor subunit 7 (462 aa).

Disordered regions lie at residues 34-68 (VLTA…NKTP) and 161-213 (TRQN…PSVL). Positions 50–62 (EPPPPVRQEPAPK) are enriched in pro residues. Residues 82–162 (AAVYVGSFSW…EKVDVRPATR (81 aa)) form the RRM domain. Residues 181–190 (HSRDSSDSAD) show a composition bias toward basic and acidic residues. Phosphothreonine is present on Thr194. Residue Ser196 is modified to Phosphoserine. Residue Lys345 forms a Glycyl lysine isopeptide (Lys-Gly) (interchain with G-Cter in SUMO2) linkage. The tract at residues 400–462 (SVGASGSSSR…HRDRERDRHH (63 aa)) is disordered. Residues Ser404 and Ser414 each carry the phosphoserine modification. The interval 409 to 460 (RKRHRSRERSPSRSRESSRRHRDLLHNEDRHDDYFQERNREHERHRDRERDR) is arg/Ser-rich domain. Basic and acidic residues-rich tracts occupy residues 416-425 (ERSPSRSRES) and 432-462 (LLHN…DRHH).

It belongs to the RRM CPSF6/7 family. As to quaternary structure, component of the cleavage factor Im (CFIm) complex which is a heterotetramer composed of two subunits of NUDT21/CPSF5 and two subunits of CPSF6 or CPSF7 or a heterodimer of CPSF6 and CPSF7. The cleavage factor Im (CFIm) complex associates with the CPSF and CSTF complexes to promote the assembly of the core mRNA 3'-processing machinery. Interacts with NUDT21/CPSF5. Interacts (via Arg/Ser-rich domain) with FIP1L1 (preferentially via unphosphorylated form and Arg/Glu/Asp-rich region); this interaction mediates, at least in part, the interaction between the CFIm and CPSF complexes and may be inhibited by CPSF7 hyper-phosphorylation. Post-translationally, phosphorylated. In terms of processing, asymmetrically dimethylated on arginine residues by PRMT1.

The protein resides in the nucleus. Its subcellular location is the cytoplasm. Component of the cleavage factor Im (CFIm) complex that functions as an activator of the pre-mRNA 3'-end cleavage and polyadenylation processing required for the maturation of pre-mRNA into functional mRNAs. CFIm contributes to the recruitment of multiprotein complexes on specific sequences on the pre-mRNA 3'-end, so called cleavage and polyadenylation signals (pA signals). Most pre-mRNAs contain multiple pA signals, resulting in alternative cleavage and polyadenylation (APA) producing mRNAs with variable 3'-end formation. The CFIm complex acts as a key regulator of cleavage and polyadenylation site choice during APA through its binding to 5'-UGUA-3' elements localized in the 3'-untranslated region (UTR) for a huge number of pre-mRNAs. CPSF7 activates directly the mRNA 3'-processing machinery. Binds to pA signals in RNA substrates. The protein is Cleavage and polyadenylation specificity factor subunit 7 of Rattus norvegicus (Rat).